Consider the following 384-residue polypeptide: S-adenosylmethionine synthase (384 aa).

Position 15 (His-15) interacts with ATP. Asp-17 lines the Mg(2+) pocket. A K(+)-binding site is contributed by Glu-43. Glu-56 and Gln-99 together coordinate L-methionine. The tract at residues 99-109 (QSPDINQGVDR) is flexible loop. ATP contacts are provided by residues 164-166 (DAK), 230-231 (RF), Asp-239, 245-246 (RK), Ala-262, and Lys-266. Asp-239 contacts L-methionine. Lys-270 is a binding site for L-methionine.

The protein belongs to the AdoMet synthase family. Homotetramer; dimer of dimers. It depends on Mg(2+) as a cofactor. The cofactor is K(+).

The protein localises to the cytoplasm. The catalysed reaction is L-methionine + ATP + H2O = S-adenosyl-L-methionine + phosphate + diphosphate. The protein operates within amino-acid biosynthesis; S-adenosyl-L-methionine biosynthesis; S-adenosyl-L-methionine from L-methionine: step 1/1. Catalyzes the formation of S-adenosylmethionine (AdoMet) from methionine and ATP. The overall synthetic reaction is composed of two sequential steps, AdoMet formation and the subsequent tripolyphosphate hydrolysis which occurs prior to release of AdoMet from the enzyme. This chain is S-adenosylmethionine synthase, found in Photobacterium profundum (strain SS9).